The chain runs to 157 residues: Crossover junction endodeoxyribonuclease RuvC (157 aa).

Residues Asp7, Glu67, and Asp139 contribute to the active site. Residues Asp7, Glu67, and Asp139 each contribute to the Mg(2+) site.

The protein belongs to the RuvC family. In terms of assembly, homodimer which binds Holliday junction (HJ) DNA. The HJ becomes 2-fold symmetrical on binding to RuvC with unstacked arms; it has a different conformation from HJ DNA in complex with RuvA. In the full resolvosome a probable DNA-RuvA(4)-RuvB(12)-RuvC(2) complex forms which resolves the HJ. Mg(2+) serves as cofactor.

The protein localises to the cytoplasm. It carries out the reaction Endonucleolytic cleavage at a junction such as a reciprocal single-stranded crossover between two homologous DNA duplexes (Holliday junction).. The RuvA-RuvB-RuvC complex processes Holliday junction (HJ) DNA during genetic recombination and DNA repair. Endonuclease that resolves HJ intermediates. Cleaves cruciform DNA by making single-stranded nicks across the HJ at symmetrical positions within the homologous arms, yielding a 5'-phosphate and a 3'-hydroxyl group; requires a central core of homology in the junction. The consensus cleavage sequence is 5'-(A/T)TT(C/G)-3'. Cleavage occurs on the 3'-side of the TT dinucleotide at the point of strand exchange. HJ branch migration catalyzed by RuvA-RuvB allows RuvC to scan DNA until it finds its consensus sequence, where it cleaves and resolves the cruciform DNA. This is Crossover junction endodeoxyribonuclease RuvC from Prochlorococcus marinus (strain MIT 9301).